Here is a 463-residue protein sequence, read N- to C-terminus: uncharacterized protein (463 aa).

The 93-residue stretch at 1 to 93 (MSYMIAVPDM…AGAYASAEAT (93 aa)) folds into the PE domain. 2 disordered regions span residues 231–320 (GGAG…AGNG) and 408–463 (NGGD…TPGQ). Over residues 408 to 451 (NGGDGGKGGDAQLIGNGGNGGNGGKGGTGLMPGINGTGGAGGSR) the composition is skewed to gly residues.

Belongs to the mycobacterial PE family. PGRS subfamily.

This is an uncharacterized protein from Mycobacterium tuberculosis (strain ATCC 25618 / H37Rv).